The following is a 156-amino-acid chain: Cytochrome c-type biogenesis protein CcmE 1 (156 aa).

Residues 1–8 (MNATRKQR) lie on the Cytoplasmic side of the membrane. A helical; Signal-anchor for type II membrane protein transmembrane segment spans residues 9-29 (LWLVIGVLAAAALAVTLIVFA). The Periplasmic portion of the chain corresponds to 30-156 (LQRNMSYLFT…ATVAPLTAPR (127 aa)). 2 residues coordinate heme: His123 and Tyr127.

The protein belongs to the CcmE/CycJ family.

The protein localises to the cell inner membrane. In terms of biological role, heme chaperone required for the biogenesis of c-type cytochromes. Transiently binds heme delivered by CcmC and transfers the heme to apo-cytochromes in a process facilitated by CcmF and CcmH. The sequence is that of Cytochrome c-type biogenesis protein CcmE 1 from Xanthomonas axonopodis pv. citri (strain 306).